A 299-amino-acid chain; its full sequence is 4-diphosphocytidyl-2-C-methyl-D-erythritol kinase (299 aa).

Lysine 17 is a catalytic residue. 99–109 (PLASGLGGGSS) lines the ATP pocket. Aspartate 142 is a catalytic residue.

It belongs to the GHMP kinase family. IspE subfamily.

It catalyses the reaction 4-CDP-2-C-methyl-D-erythritol + ATP = 4-CDP-2-C-methyl-D-erythritol 2-phosphate + ADP + H(+). It participates in isoprenoid biosynthesis; isopentenyl diphosphate biosynthesis via DXP pathway; isopentenyl diphosphate from 1-deoxy-D-xylulose 5-phosphate: step 3/6. In terms of biological role, catalyzes the phosphorylation of the position 2 hydroxy group of 4-diphosphocytidyl-2C-methyl-D-erythritol. This chain is 4-diphosphocytidyl-2-C-methyl-D-erythritol kinase, found in Deinococcus radiodurans (strain ATCC 13939 / DSM 20539 / JCM 16871 / CCUG 27074 / LMG 4051 / NBRC 15346 / NCIMB 9279 / VKM B-1422 / R1).